We begin with the raw amino-acid sequence, 199 residues long: Peroxiredoxin-1 (199 aa).

The Thioredoxin domain occupies 6 to 165; sequence AFIGKPAPDF…TLRLVQAFQF (160 aa). C52 functions as the Cysteine sulfenic acid (-SOH) intermediate in the catalytic mechanism.

Belongs to the peroxiredoxin family. AhpC/Prx1 subfamily. As to quaternary structure, homodimer; disulfide-linked, upon oxidation. 5 homodimers assemble to form a ring-like decamer. Interacts with GDPD5; forms a mixed-disulfide with GDPD5. Interacts with SESN1 and SESN2. Post-translationally, the enzyme can be inactivated by further oxidation of the cysteine sulfenic acid (C(P)-SOH) to sulphinic acid (C(P)-SO2H) instead of its condensation to a disulfide bond. It can be reactivated by forming a transient disulfide bond with sulfiredoxin SRXN1, which reduces the cysteine sulfinic acid in an ATP- and Mg-dependent manner.

Its subcellular location is the cytoplasm. It carries out the reaction a hydroperoxide + [thioredoxin]-dithiol = an alcohol + [thioredoxin]-disulfide + H2O. In terms of biological role, thiol-specific peroxidase that catalyzes the reduction of hydrogen peroxide and organic hydroperoxides to water and alcohols, respectively. Plays a role in cell protection against oxidative stress by detoxifying peroxides and as sensor of hydrogen peroxide-mediated signaling events. Might participate in the signaling cascades of growth factors and tumor necrosis factor-alpha by regulating the intracellular concentrations of H(2)O(2). Reduces an intramolecular disulfide bond in GDPD5 that gates the ability to GDPD5 to drive postmitotic motor neuron differentiation. The chain is Peroxiredoxin-1 (PRDX1) from Gallus gallus (Chicken).